A 476-amino-acid chain; its full sequence is Adenosylhomocysteinase (476 aa).

Positions 65, 140, and 201 each coordinate substrate. 202-204 is a binding site for NAD(+); the sequence is TTT. Residues K231 and D235 each contribute to the substrate site. NAD(+) is bound by residues N236, 265-270, E288, N323, 344-346, and N392; these read GYGDVG and IGH.

Belongs to the adenosylhomocysteinase family. NAD(+) is required as a cofactor.

It localises to the cytoplasm. The enzyme catalyses S-adenosyl-L-homocysteine + H2O = L-homocysteine + adenosine. It functions in the pathway amino-acid biosynthesis; L-homocysteine biosynthesis; L-homocysteine from S-adenosyl-L-homocysteine: step 1/1. Its function is as follows. May play a key role in the regulation of the intracellular concentration of adenosylhomocysteine. This is Adenosylhomocysteinase from Bacteroides thetaiotaomicron (strain ATCC 29148 / DSM 2079 / JCM 5827 / CCUG 10774 / NCTC 10582 / VPI-5482 / E50).